We begin with the raw amino-acid sequence, 582 residues long: DNA primase (582 aa).

The CHC2-type zinc finger occupies 40 to 64 (CPFHHEKTPSFTVSQKKQFYHCFGC). The region spanning 259–341 (EMLLVVEGYM…GRQLKFVFLP (83 aa)) is the Toprim domain. Residues glutamate 265, aspartate 309, and aspartate 311 each contribute to the Mg(2+) site.

The protein belongs to the DnaG primase family. Monomer. Interacts with DnaB. Zn(2+) serves as cofactor. Mg(2+) is required as a cofactor.

It catalyses the reaction ssDNA + n NTP = ssDNA/pppN(pN)n-1 hybrid + (n-1) diphosphate.. In terms of biological role, RNA polymerase that catalyzes the synthesis of short RNA molecules used as primers for DNA polymerase during DNA replication. This Pasteurella multocida (strain Pm70) protein is DNA primase.